Reading from the N-terminus, the 156-residue chain is D-aminoacyl-tRNA deacylase (156 aa).

The Gly-cisPro motif, important for rejection of L-amino acids motif lies at 137 to 138 (GP).

This sequence belongs to the DTD family. As to quaternary structure, homodimer.

It is found in the cytoplasm. The catalysed reaction is glycyl-tRNA(Ala) + H2O = tRNA(Ala) + glycine + H(+). It catalyses the reaction a D-aminoacyl-tRNA + H2O = a tRNA + a D-alpha-amino acid + H(+). An aminoacyl-tRNA editing enzyme that deacylates mischarged D-aminoacyl-tRNAs. Also deacylates mischarged glycyl-tRNA(Ala), protecting cells against glycine mischarging by AlaRS. Acts via tRNA-based rather than protein-based catalysis; rejects L-amino acids rather than detecting D-amino acids in the active site. By recycling D-aminoacyl-tRNA to D-amino acids and free tRNA molecules, this enzyme counteracts the toxicity associated with the formation of D-aminoacyl-tRNA entities in vivo and helps enforce protein L-homochirality. This chain is D-aminoacyl-tRNA deacylase, found in Dictyoglomus turgidum (strain DSM 6724 / Z-1310).